The primary structure comprises 2492 residues: Polyketide synthase 19 (2492 aa).

Residues 12–463 (REPIAIVGTS…GTNAHAIVES (452 aa)) enclose the Ketosynthase family 3 (KS3) domain. Active-site for beta-ketoacyl synthase activity residues include C202, H341, and H383. The tract at residues 571 to 866 (VFTGQGAQWA…LEVGPHPALK (296 aa)) is malonyl-CoA:ACP transacylase (MAT) domain. Residues 967–1110 (HELLGRSVSH…GRIRLWLEQP (144 aa)) are N-terminal hotdog fold. The interval 967-1270 (HELLGRSVSH…GVQMTAIGKP (304 aa)) is dehydratase (DH) domain. Positions 967-1273 (HELLGRSVSH…MTAIGKPPDR (307 aa)) constitute a PKS/mFAS DH domain. Residue H1001 is the Proton acceptor; for dehydratase activity of the active site. A C-terminal hotdog fold region spans residues 1125-1273 (MSELNMAQVY…MTAIGKPPDR (149 aa)). The active-site Proton donor; for dehydratase activity is the D1183. The segment at 1431–1604 (LGAIVKQLGH…KTTGFSGVDI (174 aa)) is C-methyltransferase (CMeT) domain. A ketoreductase (KR) domain region spans residues 2118–2293 (SYLLFGMTGD…AGSIVHISVL (176 aa)). Residues 2404–2479 (PILEKRFAQA…RVCDDVLVDW (76 aa)) enclose the Carrier domain. S2438 bears the O-(pantetheine 4'-phosphoryl)serine mark.

Its function is as follows. Highly reducing polyketide synthase; part of the gene cluster that mediates the biosynthesis of fujikurins A-D, secondary metabolites playing a role during rice infection. The polyketide synthase PKS19 acts with the trans-enoyl reductase FFUJ_12240 and the polyketide transferase FFUJ_12241 to produce fujikurins, however, the biosynthesis pathway has not been identified yet. In Gibberella fujikuroi (strain CBS 195.34 / IMI 58289 / NRRL A-6831) (Bakanae and foot rot disease fungus), this protein is Polyketide synthase 19.